The chain runs to 749 residues: Transcription factor RFX3 (749 aa).

Residues 183–258 (HLQWLLDNYE…YHYYGIRVKP (76 aa)) constitute a DNA-binding region (RFX-type winged-helix).

The protein belongs to the RFX family.

It localises to the nucleus. Transcription factor required for ciliogenesis and islet cell differentiation during endocrine pancreas development. The sequence is that of Transcription factor RFX3 (rfx3) from Xenopus tropicalis (Western clawed frog).